Reading from the N-terminus, the 526-residue chain is MSESEHQNVGRSPLGFAGPLSLSMPSFDFWYSSTFWLYLFLGLWFHRYFRLLVHCVSHWTYKSKPIPSKPTFTSKDVTVVIPTIHNAFEELRPSLESILACEPAELILVTTHDKRKELQKLADSLVFPKVRVLDTPIANKRLQVCEALPKVETPITIMADDDVTWPSTLMPWILAPFEDPEIGGVGTCQRVRREHDGSWSTKAWNWLGAAYIERRNFEISATHNIDGGTSCMSGRTGAYRSEILSSHDFLHGFKNEKWRKWILNADDDNFVTRWLVSHQWKTWIQYEKECEIETTLENSTKFLYQCSRWARSNWRSNWTSMVTERYIWKQQLWCTYALHFATFTSLAFLIDPLLLASCWWGTADWDMQNRRYAFWSQFVFMFAFTKVVKLMGLFIRNPTDVMFLPVSVVFGYFHGLVKLYALITLNMTSWGSRADGDANDEQRLAPAPQPSIVLKTPPGKGSLIRYNARQKGRQTQAQQVSWEKSDYASYDSSTSYVPIRVHTPMATTPIDTKLYTNESSNTCWAI.

A helical transmembrane segment spans residues 25 to 45; that stretch reads PSFDFWYSSTFWLYLFLGLWF. 2 N-linked (GlcNAc...) asparagine glycosylation sites follow: Asn-298 and Asn-317. 3 consecutive transmembrane segments (helical) span residues 340–360, 375–395, and 403–423; these read FATF…SCWW, WSQF…GLFI, and FLPV…YALI. 2 N-linked (GlcNAc...) asparagine glycosylation sites follow: Asn-426 and Asn-517.

This sequence belongs to the GT2 glycosyltransferase family.

It is found in the cell membrane. Its subcellular location is the secreted. The protein resides in the cell wall. In terms of biological role, glycosyltransferase involved in the maintenance of the outermost surface of the fungal cell wall. Likely functions in the synthesis of a currently unknown, potentially minor but widespread, extracellular or outer cell wall polysaccharide which plays a key role in facilitating many interactions between plants and fungi by enabling hyphal growth on solid matrices. This Gibberella zeae (strain ATCC MYA-4620 / CBS 123657 / FGSC 9075 / NRRL 31084 / PH-1) (Wheat head blight fungus) protein is Type 2 glycosyltransferase.